Here is a 402-residue protein sequence, read N- to C-terminus: Selenoprotein P (402 aa).

An N-terminal signal peptide occupies residues 1–19 (MWRGLGLALALCLLLTGGT). Sec59 is a non-standard amino acid (selenocysteine). Residues Asn83 and Asn174 are each glycosylated (N-linked (GlcNAc...) asparagine). The interval 196 to 291 (KTAEASQRHH…VGSESLQPSL (96 aa)) is disordered. Residues 203–231 (RHHHPHPHSHPHPHPHPHPHPHPHPHHGH) show a composition bias toward basic residues. Tandem repeats lie at residues 204–205 (HH), 206–207 (HP), 208–209 (HP), 210–211 (HS), 212–213 (HP), 214–215 (HP), 216–217 (HP), 218–219 (HP), 220–221 (HP), 222–223 (HP), 224–225 (HP), 226–227 (HP), and 228–229 (HH). A 13 X 2 AA tandem repeats of H-[PHS] region spans residues 204-229 (HHHPHPHSHPHPHPHPHPHPHPHPHH). Residues 232–247 (QLHENAHLSESPKPDT) show a composition bias toward basic and acidic residues. Over residues 259–269 (LHHHHHRHKGP) the composition is skewed to basic residues. Ser284 carries the phosphoserine modification. Non-standard amino acids (selenocysteine) are located at Sec297, Sec307, Sec338, Sec350, Sec363, Sec365, Sec372, Sec388, Sec390, Sec397, and Sec399. Residues 367-402 (LPPAAUQAAGQQLNPTEASTKUSUKNKAKMUKUPSN) are disordered.

The protein belongs to the selenoprotein P family. In terms of processing, phosphorylation sites are present in the extracellular medium. In terms of tissue distribution, brain and kidney. Most prominently expressed in the cerebellar cortex, hippocampus and olfactory bulb.

It localises to the secreted. Its function is as follows. Constitutes a major selenium pool in the brain and may play an important role in developing and/or modulating the morphology of neurons and/or glial cells. The chain is Selenoprotein P from Bos taurus (Bovine).